A 376-amino-acid polypeptide reads, in one-letter code: Inactive CLIP domain-containing serine protease A28 (376 aa).

A signal peptide spans Met-1 to Gly-19. A Clip domain is found at Glu-24–Gln-80. 3 cysteine pairs are disulfide-bonded: Cys-28-Cys-78, Cys-33-Cys-71, and Cys-39-Cys-79. Residue Asn-41 is glycosylated (N-linked (GlcNAc...) asparagine). A disordered region spans residues Pro-85 to Thr-106. A Peptidase S1 domain is found at Asn-114–Val-364. N-linked (GlcNAc...) asparagine glycans are attached at residues Asn-125 and Asn-279. 3 disulfides stabilise this stretch: Cys-251-Cys-321, Cys-280-Cys-301, and Cys-311-Cys-340. An N-linked (GlcNAc...) asparagine glycan is attached at Asn-369.

It belongs to the peptidase S1 family. CLIP subfamily. In terms of assembly, may form a heterodimer of a light chain and a heavy chain; disulfide-linked. In terms of processing, secreted as a full-length protein. Proteolytically cleaved into two chains which probably remain covalently linked. Cleavage is induced by fungus B.bassiana and Gram-positive or Gram-negative bacteria infection.

The protein localises to the secreted. Inactive serine protease which plays an essential role in the innate immune response against bacteria, fungi and protozoa infection by activating the melanization cascade. In the melanization cascade, acts downstream of TEP1, SPCLIP1 and CLIPA8 to promote CLIPC9 proteolytic cleavage. In the susceptible strain G3, appears to be dispensable for parasite P.berghei ookinete elimination which occurs by lysis. Required for the melanization of Gram-positive and Gram-negative bacteria. Required for the melanization of fungus B.bassiana. This Anopheles gambiae (African malaria mosquito) protein is Inactive CLIP domain-containing serine protease A28.